Here is a 257-residue protein sequence, read N- to C-terminus: Type III pantothenate kinase (257 aa).

D6–V13 contacts ATP. Substrate contacts are provided by residues Y100 and G107–R110. D109 (proton acceptor) is an active-site residue. D129 contacts K(+). Position 132 (T132) interacts with ATP. T184 contacts substrate.

The protein belongs to the type III pantothenate kinase family. Homodimer. The cofactor is NH4(+). It depends on K(+) as a cofactor.

It localises to the cytoplasm. It catalyses the reaction (R)-pantothenate + ATP = (R)-4'-phosphopantothenate + ADP + H(+). It participates in cofactor biosynthesis; coenzyme A biosynthesis; CoA from (R)-pantothenate: step 1/5. Catalyzes the phosphorylation of pantothenate (Pan), the first step in CoA biosynthesis. This is Type III pantothenate kinase from Clostridium botulinum (strain Alaska E43 / Type E3).